Here is a 448-residue protein sequence, read N- to C-terminus: Squalene synthase ERG9 (448 aa).

Residues 428-448 form a helical membrane-spanning segment; sequence CNVVLFGIGALILSLIYFVLY.

Belongs to the phytoene/squalene synthase family. The cofactor is Mg(2+).

It localises to the endoplasmic reticulum membrane. The protein localises to the microsome. The enzyme catalyses 2 (2E,6E)-farnesyl diphosphate + NADPH + H(+) = squalene + 2 diphosphate + NADP(+). The catalysed reaction is 2 (2E,6E)-farnesyl diphosphate + NADH + H(+) = squalene + 2 diphosphate + NAD(+). The protein operates within terpene metabolism; lanosterol biosynthesis; lanosterol from farnesyl diphosphate: step 1/3. In terms of biological role, squalene synthase; part of the third module of ergosterol biosynthesis pathway that includes the late steps of the pathway. ERG9 produces squalene from 2 farnesyl pyrophosphate moieties. The third module or late pathway involves the ergosterol synthesis itself through consecutive reactions that mainly occur in the endoplasmic reticulum (ER) membrane. Firstly, the squalene synthase ERG9 catalyzes the condensation of 2 farnesyl pyrophosphate moieties to form squalene, which is the precursor of all steroids. Squalene synthase is crucial for balancing the incorporation of farnesyl diphosphate (FPP) into sterol and nonsterol isoprene synthesis. Secondly, the squalene epoxidase ERG1 catalyzes the stereospecific oxidation of squalene to (S)-2,3-epoxysqualene, which is considered to be a rate-limiting enzyme in steroid biosynthesis. Then, the lanosterol synthase ERG7 catalyzes the cyclization of (S)-2,3 oxidosqualene to lanosterol, a reaction that forms the sterol core. In the next steps, lanosterol is transformed to zymosterol through a complex process involving various demethylation, reduction and desaturation reactions. The lanosterol 14-alpha-demethylase ERG11 (also known as CYP51) catalyzes C14-demethylation of lanosterol to produce 4,4'-dimethyl cholesta-8,14,24-triene-3-beta-ol, which is critical for ergosterol biosynthesis. The C-14 reductase ERG24 reduces the C14=C15 double bond of 4,4-dimethyl-cholesta-8,14,24-trienol to produce 4,4-dimethyl-cholesta-8,24-dienol. 4,4-dimethyl-cholesta-8,24-dienol is substrate of the C-4 demethylation complex ERG25-ERG26-ERG27 in which ERG25 catalyzes the three-step monooxygenation required for the demethylation of 4,4-dimethyl and 4alpha-methylsterols, ERG26 catalyzes the oxidative decarboxylation that results in a reduction of the 3-beta-hydroxy group at the C-3 carbon to an oxo group, and ERG27 is responsible for the reduction of the keto group on the C-3. ERG28 has a role as a scaffold to help anchor ERG25, ERG26 and ERG27 to the endoplasmic reticulum and ERG29 regulates the activity of the iron-containing C4-methylsterol oxidase ERG25. Then, the sterol 24-C-methyltransferase ERG6 catalyzes the methyl transfer from S-adenosyl-methionine to the C-24 of zymosterol to form fecosterol. The C-8 sterol isomerase ERG2 catalyzes the reaction which results in unsaturation at C-7 in the B ring of sterols and thus converts fecosterol to episterol. The sterol-C5-desaturase ERG3 then catalyzes the introduction of a C-5 double bond in the B ring to produce 5-dehydroepisterol. The C-22 sterol desaturase ERG5 further converts 5-dehydroepisterol into ergosta-5,7,22,24(28)-tetraen-3beta-ol by forming the C-22(23) double bond in the sterol side chain. Finally, ergosta-5,7,22,24(28)-tetraen-3beta-ol is substrate of the C-24(28) sterol reductase ERG4 to produce ergosterol. This is Squalene synthase ERG9 from Candida albicans (strain SC5314 / ATCC MYA-2876) (Yeast).